We begin with the raw amino-acid sequence, 265 residues long: ATP synthase subunit a (265 aa).

The next 5 helical transmembrane spans lie at 25–45, 88–108, 142–162, 207–227, and 233–253; these read FWAV…LFLW, IAPL…MDLI, DLNT…IYSI, LFGN…IGFW, and FAWA…FMML.

It belongs to the ATPase A chain family. F-type ATPases have 2 components, CF(1) - the catalytic core - and CF(0) - the membrane proton channel. CF(1) has five subunits: alpha(3), beta(3), gamma(1), delta(1), epsilon(1). CF(0) has three main subunits: a(1), b(2) and c(9-12). The alpha and beta chains form an alternating ring which encloses part of the gamma chain. CF(1) is attached to CF(0) by a central stalk formed by the gamma and epsilon chains, while a peripheral stalk is formed by the delta and b chains.

The protein resides in the cell inner membrane. Its function is as follows. Key component of the proton channel; it plays a direct role in the translocation of protons across the membrane. This is ATP synthase subunit a from Idiomarina loihiensis (strain ATCC BAA-735 / DSM 15497 / L2-TR).